A 127-amino-acid chain; its full sequence is Large ribosomal subunit protein bL17 (127 aa).

It belongs to the bacterial ribosomal protein bL17 family. In terms of assembly, part of the 50S ribosomal subunit. Contacts protein L32.

This chain is Large ribosomal subunit protein bL17, found in Stenotrophomonas maltophilia (strain K279a).